Consider the following 344-residue polypeptide: Methionine import ATP-binding protein MetN (344 aa).

The ABC transporter domain maps to 2–241 (IEIKSVNKVF…PKTELAHQFI (240 aa)). An ATP-binding site is contributed by 38 to 45 (GSSGAGKS).

It belongs to the ABC transporter superfamily. Methionine importer (TC 3.A.1.24) family. The complex is composed of two ATP-binding proteins (MetN), two transmembrane proteins (MetI) and a solute-binding protein (MetQ).

It is found in the cell inner membrane. The catalysed reaction is L-methionine(out) + ATP + H2O = L-methionine(in) + ADP + phosphate + H(+). It carries out the reaction D-methionine(out) + ATP + H2O = D-methionine(in) + ADP + phosphate + H(+). In terms of biological role, part of the ABC transporter complex MetNIQ involved in methionine import. Responsible for energy coupling to the transport system. The polypeptide is Methionine import ATP-binding protein MetN (Vibrio cholerae serotype O1 (strain ATCC 39315 / El Tor Inaba N16961)).